The following is a 635-amino-acid chain: Surface protein F (635 aa).

The signal sequence occupies residues 1–37 (MAKYRGKPFQLYVKLSCSTMMATSIILTNILPYDAQA). Composition is skewed to basic and acidic residues over residues 101 to 112 (NELDSKDNKSSH) and 193 to 202 (KSKDASKDTS). 2 disordered regions span residues 101 to 122 (NELDSKDNKSSHTEMNGQSDID) and 192 to 228 (HKSKDASKDTSEDPAVSTTDNNHEVAKTPNNDGSGHV). Positions 597-601 (LPKAG) match the LPXTG sorting signal motif. A Pentaglycyl murein peptidoglycan amidated alanine modification is found at Ala600. A propeptide spans 601–635 (GETIKEHWLPISVIVGAMGVLMIWLSRRNKLKNKA) (removed by sortase).

It is found in the secreted. The protein localises to the cell wall. The sequence is that of Surface protein F from Staphylococcus aureus (strain NCTC 8325 / PS 47).